The chain runs to 348 residues: ECA polysaccharide chain length modulation protein (348 aa).

Residues 1 to 30 (MTQPMPGKPAEDAENELDIRGLFRTLWAGK) are Cytoplasmic-facing. A helical membrane pass occupies residues 31–51 (LWIIGMGLAFALIALAYTFFA). Residues 52–322 (RQEWSSTAIT…EPVKRDSPRR (271 aa)) are Periplasmic-facing. A helical transmembrane segment spans residues 323-343 (AFLMIMWGIVGGLIGAGVALT). The Cytoplasmic portion of the chain corresponds to 344–348 (RRCSK).

The protein belongs to the WzzB/Cld/Rol family. Homooctamer. Probably part of a complex composed of WzxE, WzyE and WzzE.

The protein localises to the cell inner membrane. It participates in bacterial outer membrane biogenesis; enterobacterial common antigen biosynthesis. In terms of biological role, modulates the polysaccharide chain length of enterobacterial common antigen (ECA). In Escherichia coli O157:H7, this protein is ECA polysaccharide chain length modulation protein.